The sequence spans 49 residues: Large ribosomal subunit protein bL33 (49 aa).

This sequence belongs to the bacterial ribosomal protein bL33 family.

The sequence is that of Large ribosomal subunit protein bL33 from Clostridioides difficile (strain 630) (Peptoclostridium difficile).